The sequence spans 814 residues: MEFILGIFCVLFCLRAGAGFGVDPSLQIDIFEDLQLGEATPGVQQVQGFHNRSKAFLFQDTSRSIKASTENAERIFQKLRNKHEFTILVTLKQAMLNSGVILSIHHSDHRYLELESSGHRNEVRLHYRSGSHRSQTEVFPYILADDKWHRFSIAISASHLVLHIDCNKIYERIVEKTFMDVPPGTALWVGQRNNVHGYFKGIMQDLQIVVMPQGFISQCPDLNRTCPTCNDFHGLVQKIMELQDILAKTSAKLSRAEQRMNRLDQCYCERSCTVKGNIYRELESWMDGCKKCTCTNGTAQCETLTCSAPNCLSGFSPAYVPGKCCKECQTVCVFQGQMYFEEEREAVYSSSGQCVLFQCKDNTMRRIESPECLPLNCPQSQHITLRNSCCKVCKGHDFCSEGHNCMGYSICKNLDDKAVCICRDGFRALREDNAYCEDIDECTEGRHYCRENTVCVNTPGSFMCVCQTGYLKIDDYSCTEHNECATNQHSCDENAMCFNTVGGHNCVCQPGYTGNGTDCRAFCKDGCRNGGTCIAPNICACPQGFTGPSCESDIDECTEGFVQCDSRANCINLPGWYHCECRDGYHDNGMFSLGGESCEDIDECATGRHSCSNDTVCFNLDGGFDCRCPHGKNCSGDCTHEGKIKHNGQIWVLENDRCSVCSCQVGLVMCRRMVCDCENPTVDLFCCPECDPRLSSQCLHQSGELTYKSGDTWVQNCQQCRCLQGEVDCWPLPCPAIDCEFSVVPESECCPRCVSDPCQADIIRNDITKTCVDETNVVRFTGSSWIKHGTECTLCQCKNGHMCCSVDPQCLQEL.

Residues 1–19 (MEFILGIFCVLFCLRAGAG) form the signal peptide. N-linked (GlcNAc...) asparagine glycans are attached at residues N51, N223, and N296. Residues 53-226 (SKAFLFQDTS…SQCPDLNRTC (174 aa)) enclose the Laminin G-like domain. Residues 270-329 (RSCTVKGNIYRELESWMDGCKKCTCTNGTAQCETLTCSAPNCLSGFSPAYVPGKCCKECQ) form the VWFC 1 domain. Residues 395-437 (GHDFCSEGHNCMGYSICKNLDDKAVCICRDGFRALREDNAYCE) enclose the EGF-like 1 domain. 3 cysteine pairs are disulfide-bonded: C399-C411, C405-C420, and C422-C436. Residues D438, I439, and E441 each contribute to the Ca(2+) site. The EGF-like 2; calcium-binding domain occupies 438 to 479 (DIDECTEGRHYCRENTVCVNTPGSFMCVCQTGYLKIDDYSCT). Cystine bridges form between C442/C455, C449/C464, C466/C478, C484/C497, C491/C506, C508/C519, C523/C533, C527/C539, and C541/C550. Positions 457, 458, and 461 each coordinate Ca(2+). One can recognise an EGF-like 3; calcium-binding domain in the interval 480 to 520 (EHNECATNQHSCDENAMCFNTVGGHNCVCQPGYTGNGTDCR). An N-linked (GlcNAc...) asparagine glycan is attached at N515. In terms of domain architecture, EGF-like 4 spans 521–551 (AFCKDGCRNGGTCIAPNICACPQGFTGPSCE). Residues D553, I554, and E556 each contribute to the Ca(2+) site. The 47-residue stretch at 553-599 (DIDECTEGFVQCDSRANCINLPGWYHCECRDGYHDNGMFSLGGESCE) folds into the EGF-like 5; calcium-binding domain. Cystine bridges form between C557/C570, C564/C579, and C581/C598. Ca(2+) is bound by residues N572, L573, and W576. Positions 600, 601, and 603 each coordinate Ca(2+). The EGF-like 6; calcium-binding domain maps to 600-635 (DIDECATGRHSCSNDTVCFNLDGGFDCRCPHGKNCS). Cystine bridges form between C604–C617, C611–C626, and C628–C634. The N-linked (GlcNAc...) asparagine glycan is linked to N613. 3 residues coordinate Ca(2+): N619, L620, and G623. Residue N633 is glycosylated (N-linked (GlcNAc...) asparagine). VWFC domains lie at 636–691 (GDCT…PECD) and 696–754 (SQCL…PRCV).

In terms of assembly, homotrimer.

The protein localises to the secreted. May regulate neuronal differentiation, polarization and axon guidance. The polypeptide is Protein kinase C-binding protein NELL2 (nell2.L) (Xenopus laevis (African clawed frog)).